The sequence spans 23 residues: Defensin-like protein 2 (23 aa).

Residue Gln-1 is modified to Pyrrolidone carboxylic acid.

It belongs to the DEFL family. In terms of assembly, forms oligomers in its native state.

Its function is as follows. Possesses antifungal activity sensitive to inorganic cations. The polypeptide is Defensin-like protein 2 (Brassica napus (Rape)).